A 75-amino-acid polypeptide reads, in one-letter code: Putative membrane protein insertion efficiency factor (75 aa).

It belongs to the UPF0161 family.

The protein resides in the cell membrane. Could be involved in insertion of integral membrane proteins into the membrane. This chain is Putative membrane protein insertion efficiency factor, found in Halalkalibacterium halodurans (strain ATCC BAA-125 / DSM 18197 / FERM 7344 / JCM 9153 / C-125) (Bacillus halodurans).